An 89-amino-acid chain; its full sequence is Small ribosomal subunit protein uS14A (89 aa).

This sequence belongs to the universal ribosomal protein uS14 family. As to quaternary structure, part of the 30S ribosomal subunit. Contacts proteins S3 and S10.

Its function is as follows. Binds 16S rRNA, required for the assembly of 30S particles and may also be responsible for determining the conformation of the 16S rRNA at the A site. This chain is Small ribosomal subunit protein uS14A, found in Streptococcus equi subsp. zooepidemicus (strain MGCS10565).